A 183-amino-acid polypeptide reads, in one-letter code: Ribosome maturation factor RimM (183 aa).

A PRC barrel domain is found at 95–171 (DPDEFYDHEL…VVVIDPPEGL (77 aa)).

It belongs to the RimM family. Binds ribosomal protein uS19.

It localises to the cytoplasm. In terms of biological role, an accessory protein needed during the final step in the assembly of 30S ribosomal subunit, possibly for assembly of the head region. Essential for efficient processing of 16S rRNA. May be needed both before and after RbfA during the maturation of 16S rRNA. It has affinity for free ribosomal 30S subunits but not for 70S ribosomes. The polypeptide is Ribosome maturation factor RimM (Rhodococcus opacus (strain B4)).